The primary structure comprises 413 residues: Putative competence-damage inducible protein (413 aa).

This sequence belongs to the CinA family.

The polypeptide is Putative competence-damage inducible protein (Lacticaseibacillus paracasei (strain ATCC 334 / BCRC 17002 / CCUG 31169 / CIP 107868 / KCTC 3260 / NRRL B-441) (Lactobacillus paracasei)).